Consider the following 433-residue polypeptide: uncharacterized protein (433 aa).

A helical membrane pass occupies residues 36 to 58 (YYYYVQLAFKMLVGVLKNLPVVY). The segment at 169–433 (VRVPSRDLQP…GEGRDLPEDN (265 aa)) is disordered. Acidic residues-rich tracts occupy residues 216–227 (GEPGENGDESDE) and 234–254 (GDED…YESD). Composition is skewed to basic and acidic residues over residues 265-280 (EPDR…RGSE), 354-364 (GGRRPARRDSP), and 422-433 (RRGEGRDLPEDN).

The protein localises to the host membrane. This is an uncharacterized protein from Psittacid herpesvirus 1 (isolate Amazon parrot/-/97-0001/1997) (PsHV-1).